The primary structure comprises 289 residues: Signal peptidase I (289 aa).

The Cytoplasmic portion of the chain corresponds to 1–43 (MKKLTSTTTTLWDNKLFINNLKNFMQTNTESNNNKTTAQEWKS). A helical transmembrane segment spans residues 44 to 64 (FILVVVIALMIRILIIESFVV). Residues 65 to 289 (PTGSMKATIL…IFRNLYSIED (225 aa)) are Periplasmic-facing. Active-site residues include serine 68 and lysine 131.

This sequence belongs to the peptidase S26 family.

It localises to the cell inner membrane. It carries out the reaction Cleavage of hydrophobic, N-terminal signal or leader sequences from secreted and periplasmic proteins.. The polypeptide is Signal peptidase I (lepB) (Rickettsia bellii (strain OSU 85-389)).